The sequence spans 307 residues: F-box protein At2g23160 (307 aa).

In terms of domain architecture, F-box spans 2-49; that stretch reads NSSSPISIDLIAEILSRVPSKSVARFRCVSKPWASMIRRPYFTELFLT.

The chain is F-box protein At2g23160 from Arabidopsis thaliana (Mouse-ear cress).